A 300-amino-acid chain; its full sequence is F-box/LRR-repeat protein 15 (300 aa).

Met1 bears the N-acetylmethionine mark. The F-box domain occupies Leu19 to Asp66. The tract at residues Asn113 to Arg269 is interaction with SMURF1. 5 LRR repeats span residues Arg141–Ala162, Ala167–Ala188, Gly194–Ala215, Glu220–Ala241, and Ala246–Arg267.

It belongs to the FBXL15 family. In terms of assembly, part of the SCF (SKP1-CUL1-F-box) E3 ubiquitin-protein ligase complex SCF(FBXL15) composed of CUL1, SKP1, RBX1 and FBXL15.

The protein localises to the cytoplasm. It participates in protein modification; protein ubiquitination. Functionally, substrate recognition component of a SCF (SKP1-CUL1-F-box protein) E3 ubiquitin-protein ligase complex which mediates the ubiquitination and subsequent proteasomal degradation of SMURF1, thereby acting as a positive regulator of the BMP signaling pathway. Required for dorsal/ventral pattern formation and bone mass maintenance. Also mediates ubiquitination of SMURF2 and WWP2. The protein is F-box/LRR-repeat protein 15 (FBXL15) of Bos taurus (Bovine).